We begin with the raw amino-acid sequence, 121 residues long: Phospholipase A2 homolog ECO_00035 (121 aa).

7 disulfides stabilise this stretch: cysteine 25–cysteine 114, cysteine 27–cysteine 43, cysteine 42–cysteine 94, cysteine 48–cysteine 121, cysteine 49–cysteine 87, cysteine 56–cysteine 80, and cysteine 74–cysteine 85. The important for membrane-damaging activities in eukaryotes and bacteria; heparin-binding stretch occupies residues 104–116; it reads KKYKIYPNILCRG.

Belongs to the phospholipase A2 family. Group II subfamily. S49 sub-subfamily. Monomer. Expressed by the venom gland.

The protein localises to the secreted. Functionally, snake venom phospholipase A2 homolog that lacks enzymatic activity. Shows high myotoxin activities and displays edema-inducing activities. Has cytotoxic activities against HUVEC cells (LC(50)=4.9 uL) and human lung adenocarcinoma A549 cells (LC(50)=3.5 uL). This is Phospholipase A2 homolog ECO_00035 from Echis coloratus (Carpet viper).